We begin with the raw amino-acid sequence, 183 residues long: Small ribosomal subunit protein eS10z (183 aa).

Residues 91–183 (LKKSARPPGR…GAGPTSSSME (93 aa)) are disordered. A compositionally biased stretch (basic and acidic residues) spans 109–130 (DRPRGPPRFEGDRPRFGDRDGY). 2 stretches are compositionally biased toward gly residues: residues 131 to 146 (RGGPRGAPGDFGGEKG) and 161 to 175 (GRPGFGRGGGGGFGA).

This sequence belongs to the eukaryotic ribosomal protein eS10 family.

The protein localises to the cytoplasm. The protein is Small ribosomal subunit protein eS10z of Oryza sativa subsp. japonica (Rice).